The primary structure comprises 188 residues: Adenine phosphoribosyltransferase (188 aa).

134 to 138 (ATGGS) provides a ligand contact to AMP.

This sequence belongs to the purine/pyrimidine phosphoribosyltransferase family. In terms of assembly, homodimer. Mg(2+) serves as cofactor.

It is found in the cytoplasm. The protein localises to the nucleus. The catalysed reaction is AMP + diphosphate = 5-phospho-alpha-D-ribose 1-diphosphate + adenine. Its pathway is purine metabolism; AMP biosynthesis via salvage pathway; AMP from adenine: step 1/1. In terms of biological role, catalyzes a salvage reaction resulting in the formation of AMP, that is energically less costly than de novo synthesis. The protein is Adenine phosphoribosyltransferase (APT1) of Candida albicans (strain SC5314 / ATCC MYA-2876) (Yeast).